The following is a 595-amino-acid chain: Indole-3-acetic acid-amido synthetase GH3.15 (595 aa).

ATP is bound by residues serine 97 to serine 98, threonine 302, and phenylalanine 325 to glutamate 330. Positions 325 and 332 each coordinate substrate. ATP is bound by residues tyrosine 348 and aspartate 408.

Belongs to the IAA-amido conjugating enzyme family. In terms of tissue distribution, expressed in seedlings, roots, and parts of the siliques.

The catalysed reaction is (indol-3-yl)butanoate + L-cysteine + ATP = (indol-3-yl)butanoyl-L-cysteine + AMP + diphosphate + H(+). It catalyses the reaction (indol-3-yl)butanoate + L-glutamine + ATP = (indol-3-yl)butanoyl-L-glutamine + AMP + diphosphate + H(+). It carries out the reaction 4-(2,4-dichlorophenoxy)butanoate + L-glutamine + ATP = 4-(2,4-dichlorophenoxy)butanoyl-L-glutamine + AMP + diphosphate + H(+). Indole-3-acetic acid-amido (IAA) synthetase that catalyzes the conjugation of amino acids to auxin specifically using the auxin precursor indole-3-butyric acid (IBA) and glutamine and, possibly, cysteine as substrates. Displays high catalytic activity with the auxinic phenoxyalkanoic acid herbicides 4-(2,4-dichlorophenoxy)butyric acid (2,4-DB) and to some extent 2,4-dichlorophenoxylacetic acid (2,4-D) as substrates, thus conferring resistance to herbicides. The protein is Indole-3-acetic acid-amido synthetase GH3.15 of Arabidopsis thaliana (Mouse-ear cress).